The chain runs to 87 residues: Small ribosomal subunit protein bS20 (87 aa).

The span at 1–11 shows a compositional bias: basic residues; sequence MAHHKSAIKRI. Positions 1–26 are disordered; sequence MAHHKSAIKRIKQNEKRNARNRHQKS.

The protein belongs to the bacterial ribosomal protein bS20 family.

Binds directly to 16S ribosomal RNA. This is Small ribosomal subunit protein bS20 from Trichlorobacter lovleyi (strain ATCC BAA-1151 / DSM 17278 / SZ) (Geobacter lovleyi).